A 351-amino-acid chain; its full sequence is Peptide chain release factor 1 (351 aa).

Q230 is subject to N5-methylglutamine.

It belongs to the prokaryotic/mitochondrial release factor family. Post-translationally, methylated by PrmC. Methylation increases the termination efficiency of RF1.

It is found in the cytoplasm. Its function is as follows. Peptide chain release factor 1 directs the termination of translation in response to the peptide chain termination codons UAG and UAA. The sequence is that of Peptide chain release factor 1 from Onion yellows phytoplasma (strain OY-M).